Consider the following 535-residue polypeptide: Probable serine/threonine protein phosphatase 2A regulatory subunit B''delta (535 aa).

The interval 67–104 (SGTNSGSNSPLASMFPARNGPPLSPRNSTGSPRIARQR) is disordered. 2 consecutive EF-hand domains span residues 174 to 209 (VPSF…GNML) and 387 to 422 (SSEP…QLHR). Residues D400, D402, N404, and E411 each coordinate Ca(2+).

As to quaternary structure, PP2A consists of a common heterodimeric core enzyme, composed of a 36 kDa catalytic subunit (subunit C) and a 65 kDa constant regulatory subunit (PR65 or subunit A), that associates with a variety of regulatory subunits. Proteins that associate with the core dimer include three families of regulatory subunits B (the R2/B/PR55/B55, R3/B''/PR72/PR130/PR59 and R5/B'/B56 families) and cell signaling molecules.

Its function is as follows. Probable regulatory subunit of type 2A protein phosphatase. This Arabidopsis thaliana (Mouse-ear cress) protein is Probable serine/threonine protein phosphatase 2A regulatory subunit B''delta (B''DELTA).